A 341-amino-acid chain; its full sequence is Nicotinate-nucleotide--dimethylbenzimidazole phosphoribosyltransferase (341 aa).

The active-site Proton acceptor is Glu306.

The protein belongs to the CobT family.

It catalyses the reaction 5,6-dimethylbenzimidazole + nicotinate beta-D-ribonucleotide = alpha-ribazole 5'-phosphate + nicotinate + H(+). It participates in nucleoside biosynthesis; alpha-ribazole biosynthesis; alpha-ribazole from 5,6-dimethylbenzimidazole: step 1/2. Its function is as follows. Catalyzes the synthesis of alpha-ribazole-5'-phosphate from nicotinate mononucleotide (NAMN) and 5,6-dimethylbenzimidazole (DMB). This is Nicotinate-nucleotide--dimethylbenzimidazole phosphoribosyltransferase from Methylocella silvestris (strain DSM 15510 / CIP 108128 / LMG 27833 / NCIMB 13906 / BL2).